We begin with the raw amino-acid sequence, 387 residues long: Probable aminomethyltransferase, mitochondrial (387 aa).

E219, R248, and Y385 together coordinate substrate.

This sequence belongs to the GcvT family. In terms of assembly, the glycine cleavage system is composed of four proteins: P, T, L and H.

It localises to the mitochondrion. The enzyme catalyses N(6)-[(R)-S(8)-aminomethyldihydrolipoyl]-L-lysyl-[protein] + (6S)-5,6,7,8-tetrahydrofolate = N(6)-[(R)-dihydrolipoyl]-L-lysyl-[protein] + (6R)-5,10-methylene-5,6,7,8-tetrahydrofolate + NH4(+). In terms of biological role, the glycine cleavage system catalyzes the degradation of glycine. The polypeptide is Probable aminomethyltransferase, mitochondrial (gcv1) (Schizosaccharomyces pombe (strain 972 / ATCC 24843) (Fission yeast)).